The chain runs to 62 residues: Enterocin E-760 (62 aa).

It localises to the secreted. Functionally, bacteriocin active against the Gram-negative bacteria S.enteritidis, S.choleraesuis, S.typhimurium, S.gallinarum, E.coli O157:H7, Y.enterocolitica, C.freundii, K.pneumoniae, S.dysentriae, P.aeruginosa, P.mirabilis, M.morganii, C.jejuni and 20 other Campylobacter isolates, and the Gram-positive bacteria S.aureus, S.epidermidis and L.monocytogenes. The protein is Enterocin E-760 of Enterococcus sp.